Reading from the N-terminus, the 158-residue chain is C-type lectin lectoxin-Enh5 (158 aa).

Positions 1–23 are cleaved as a signal peptide; the sequence is MGQFTVVSLGLLAVFLSLSGAKG. 3 disulfide bridges follow: cysteine 26–cysteine 37, cysteine 54–cysteine 154, and cysteine 129–cysteine 146. The C-type lectin domain occupies 33 to 155; that stretch reads RNGVCNKLFP…CASLHPFICQ (123 aa). The Mannose-binding motif lies at 119–121; that stretch reads EPN. Residues glutamate 127, asparagine 142, and aspartate 143 each coordinate Ca(2+).

It belongs to the true venom lectin family. As to expression, expressed by the venom gland.

It localises to the secreted. Mannose-binding lectin which recognizes specific carbohydrate structures and agglutinates a variety of animal cells by binding to cell-surface glycoproteins and glycolipids. May be a calcium-dependent lectin. The sequence is that of C-type lectin lectoxin-Enh5 from Pseudoferania polylepis (Macleay's water snake).